Here is a 1358-residue protein sequence, read N- to C-terminus: Tenascin-R (1358 aa).

The N-terminal stretch at 1–31 (MGIDGETVVLKNMLIGVNLILLGSMLKPSEC) is a signal peptide. Positions 37-58 (TERAQRQTVEEEGGASSYNTSS) are disordered. Asparagine 55 is a glycosylation site (N-linked (GlcNAc...) asparagine). Residues 127 to 157 (CASSSQVLQELLSRIEMLEREVSLLRDQCNT) adopt a coiled-coil conformation. Serine 176 carries an O-linked (Xyl...) (chondroitin sulfate) serine glycan. Residues asparagine 180 and asparagine 198 are each glycosylated (N-linked (GlcNAc...) asparagine). 3 EGF-like domains span residues 188–199 (CICNEGWFGKNC), 219–230 (CICDSEYSGDDC), and 250–261 (CVCEEPYTGEDC). Residue serine 271 is glycosylated (O-linked (Xyl...) (chondroitin sulfate) serine). Asparagine 278 carries N-linked (GlcNAc...) asparagine glycosylation. The EGF-like 4 domain occupies 281 to 292 (CLCQEGYAGEDC). 2 disulfide bridges follow: cysteine 297–cysteine 307 and cysteine 314–cysteine 323. Residue serine 302 is glycosylated (O-linked (Xyl...) (chondroitin sulfate) serine). The EGF-like 5 domain maps to 312–323 (CICEEGYQGPDC). 9 Fibronectin type-III domains span residues 328 to 420 (PPED…TPQG), 421 to 505 (LQFK…TVID), 506 to 597 (GPTQ…IDAP), 598 to 687 (KNLR…TELD), 688 to 777 (SPRD…FRPI), 778 to 865 (SHLH…TGID), 866 to 955 (PPKN…AMDS), 956 to 1042 (PMDL…TLLD), and 1043 to 1131 (PPDN…GGRV). 3 N-linked (GlcNAc...) asparagine glycosylation sites follow: asparagine 392, asparagine 470, and asparagine 581. Serine 724 bears the Phosphoserine mark. Residues asparagine 791, asparagine 869, asparagine 874, asparagine 1036, asparagine 1046, and asparagine 1261 are each glycosylated (N-linked (GlcNAc...) asparagine). The 216-residue stretch at 1129–1344 (GRVFSHPQDC…FVEMKMRPYI (216 aa)) folds into the Fibrinogen C-terminal domain.

This sequence belongs to the tenascin family. In terms of assembly, interacts with BCAN and ACAN in a calcium-dependent manner. Interacts with SCN2B, PTPRZ1, and CSPG3. Forms oligomers. Isoforms 1 and 2 form respectively trimeric (tribrachion) and dimeric kink-armed rodlike structures, which are linked by disulfide bridges. Interacts with CNTN1, TNC and FN1. Contains N-linked oligosaccharides with a sulfated carbohydrate structures. Contains N-linked oligosaccharides, O-linked sialylated structures and O-linked chondroitin sulfate glycosaminoglycans. As to expression, brain-specific.

The protein localises to the secreted. It localises to the extracellular space. It is found in the extracellular matrix. Functionally, neural extracellular matrix (ECM) protein involved in interactions with different cells and matrix components. Theses interactions can influence cellular behavior by either evoking a stable adhesion and differentiation, or repulsion and inhibition of neurite growth. Binding to cell surface gangliosides inhibits RGD-dependent integrin-mediated cell adhesion and results in an inhibition of PTK2/FAK1 (FAK) phosphorylation and cell detachment. Binding to membrane surface sulfatides results in a oligodendrocyte adhesion and differentiation. Interaction with CNTN1 induces a repulsion of neurons and an inhibition of neurite outgrowth. Interacts with SCN2B may play a crucial role in clustering and regulation of activity of sodium channels at nodes of Ranvier. TNR-linked chondroitin sulfate glycosaminoglycans are involved in the interaction with FN1 and mediates inhibition of cell adhesion and neurite outgrowth. The highly regulated addition of sulfated carbohydrate structure may modulate the adhesive properties of TNR over the course of development and during synapse maintenance. This chain is Tenascin-R (Tnr), found in Mus musculus (Mouse).